A 362-amino-acid polypeptide reads, in one-letter code: Putative protein ARB2BP (362 aa).

A helical transmembrane segment spans residues 229–245 (IAFIVHGYGGLVFMDLL).

The protein belongs to the ARB2 family.

The protein localises to the membrane. The chain is Putative protein ARB2BP from Homo sapiens (Human).